We begin with the raw amino-acid sequence, 333 residues long: 6-phosphogluconolactonase (333 aa).

This sequence belongs to the cycloisomerase 2 family.

The catalysed reaction is 6-phospho-D-glucono-1,5-lactone + H2O = 6-phospho-D-gluconate + H(+). It functions in the pathway carbohydrate degradation; pentose phosphate pathway; D-ribulose 5-phosphate from D-glucose 6-phosphate (oxidative stage): step 2/3. In terms of biological role, catalyzes the hydrolysis of 6-phosphogluconolactone to 6-phosphogluconate. The protein is 6-phosphogluconolactonase of Yersinia enterocolitica serotype O:8 / biotype 1B (strain NCTC 13174 / 8081).